A 162-amino-acid chain; its full sequence is ATP synthase subunit b (162 aa).

The chain crosses the membrane as a helical span at residues 6–28; the sequence is LVTFVLTIVNILVLFYLLKRFLF.

The protein belongs to the ATPase B chain family. In terms of assembly, F-type ATPases have 2 components, F(1) - the catalytic core - and F(0) - the membrane proton channel. F(1) has five subunits: alpha(3), beta(3), gamma(1), delta(1), epsilon(1). F(0) has three main subunits: a(1), b(2) and c(10-14). The alpha and beta chains form an alternating ring which encloses part of the gamma chain. F(1) is attached to F(0) by a central stalk formed by the gamma and epsilon chains, while a peripheral stalk is formed by the delta and b chains.

It localises to the cell membrane. Its function is as follows. F(1)F(0) ATP synthase produces ATP from ADP in the presence of a proton or sodium gradient. F-type ATPases consist of two structural domains, F(1) containing the extramembraneous catalytic core and F(0) containing the membrane proton channel, linked together by a central stalk and a peripheral stalk. During catalysis, ATP synthesis in the catalytic domain of F(1) is coupled via a rotary mechanism of the central stalk subunits to proton translocation. Functionally, component of the F(0) channel, it forms part of the peripheral stalk, linking F(1) to F(0). The sequence is that of ATP synthase subunit b from Natranaerobius thermophilus (strain ATCC BAA-1301 / DSM 18059 / JW/NM-WN-LF).